We begin with the raw amino-acid sequence, 97 residues long: Integration host factor subunit alpha (97 aa).

The disordered stretch occupies residues Phe49–Ile71.

Belongs to the bacterial histone-like protein family. As to quaternary structure, heterodimer of an alpha and a beta chain.

Its function is as follows. This protein is one of the two subunits of integration host factor, a specific DNA-binding protein that functions in genetic recombination as well as in transcriptional and translational control. In Shewanella woodyi (strain ATCC 51908 / MS32), this protein is Integration host factor subunit alpha.